The following is a 638-amino-acid chain: Exotoxin A (638 aa).

The first 25 residues, 1–25 (MHLTPHWIPLVASLGLLAGGSFASA), serve as a signal peptide directing secretion. A domain Ia (required for target cell recognition) region spans residues 26 to 277 (AEEAFDLWNE…VISHRLHFPE (252 aa)). The II (required for translocation in target cell cytoplasm) stretch occupies residues 278-389 (GGSLAALTAH…TGNDEAGAAS (112 aa)). A disulfide bridge connects residues C290 and C312. Positions 390–429 (ADVVSLTCPVAAGECAGPADSGDALLERNYPTGAEFLGDG) are domain Ib. The tract at residues 430 to 638 (GDISFSTRGT…PGKPPREDLK (209 aa)) is III (required for ADP-ribosyl activity). Residues 465 to 467 (HGT), S474, 479 to 485 (GVRARSQ), and E578 each bind NAD(+). The active site involves E578. The tract at residues 596–638 (IPTDPRNVGGDLDPSSIPDKEQAISALPDYASQPGKPPREDLK) is disordered.

Post-translationally, the 8 cysteines participate in intrachain disulfide bonds.

The catalysed reaction is diphthamide-[translation elongation factor 2] + NAD(+) = N-(ADP-D-ribosyl)diphthamide-[translation elongation factor 2] + nicotinamide + H(+). With respect to regulation, inhibited by 1,8-naphthalimide (NAP) as well as a number of poly(ADP-ribose) polymerase inhibitors and other compounds. In terms of biological role, an NAD-dependent ADP-ribosyltransferase (ADPRT). Catalyzes the transfer of the ADP ribosyl moiety of oxidized NAD (NAD(+)) onto eukaryotic elongation factor 2 (eEF-2) thus arresting protein synthesis. Has an LD(50) of 65 ng/ml against the human lung epithelial cell line C38. The sequence is that of Exotoxin A from Pseudomonas aeruginosa (strain ATCC 15692 / DSM 22644 / CIP 104116 / JCM 14847 / LMG 12228 / 1C / PRS 101 / PAO1).